The following is a 324-amino-acid chain: COP9 signalosome complex subunit 6 (324 aa).

In terms of domain architecture, MPN spans 38–171 (VALHPLVILN…VSVFESVIDI (134 aa)).

Belongs to the peptidase M67A family. CSN6 subfamily. Component of the CSN complex, composed of COPS1/GPS1, COPS2, COPS3, COPS4, COPS5, COPS6, COPS7 (COPS7A or COPS7B), COPS8 and COPS9. In the complex, it probably interacts directly with COPS2, COPS4, COPS5, COPS7 (COPS7A or COPS7B) and COPS9. Interacts with the translation initiation factor EIF3S6. Interacts weakly with RBX1. Directly interacts with COP1 and 14-3-3 protein sigma/SFN. Interacts with ERCC6.

Its subcellular location is the cytoplasm. The protein resides in the nucleus. Component of the COP9 signalosome complex (CSN), a complex involved in various cellular and developmental processes. The CSN complex is an essential regulator of the ubiquitin (Ubl) conjugation pathway by mediating the deneddylation of the cullin subunits of SCF-type E3 ligase complexes, leading to decrease the Ubl ligase activity of SCF-type complexes such as SCF, CSA or DDB2. The complex is also involved in phosphorylation of p53/TP53, c-jun/JUN, IkappaBalpha/NFKBIA, ITPK1 and IRF8, possibly via its association with CK2 and PKD kinases. CSN-dependent phosphorylation of TP53 and JUN promotes and protects degradation by the Ubl system, respectively. Has some glucocorticoid receptor-responsive activity. Stabilizes COP1 through reducing COP1 auto-ubiquitination and decelerating COP1 turnover rate, hence regulates the ubiquitination of COP1 targets, including SFN. In Bos taurus (Bovine), this protein is COP9 signalosome complex subunit 6 (COPS6).